Reading from the N-terminus, the 461-residue chain is Chromosomal replication initiator protein DnaA (461 aa).

The segment at 1 to 87 is domain I, interacts with DnaA modulators; that stretch reads MAVSLWQQCI…IGSRPSAKPV (87 aa). Residues 87–124 are domain II; sequence VVQATAAVRTSRPVTREVTKPSFNTPHAEPMANANHRS. The interval 99–125 is disordered; that stretch reads PVTREVTKPSFNTPHAEPMANANHRSN. A domain III, AAA+ region region spans residues 125–341; sequence NINPTYQFDN…GALNRVIANA (217 aa). The ATP site is built by G169, G171, K172, and T173. Residues 342–461 are domain IV, binds dsDNA; the sequence is NFTGRPITID…YANLIRTLSS (120 aa).

It belongs to the DnaA family. As to quaternary structure, oligomerizes as a right-handed, spiral filament on DNA at oriC.

The protein localises to the cytoplasm. Functionally, plays an essential role in the initiation and regulation of chromosomal replication. ATP-DnaA binds to the origin of replication (oriC) to initiate formation of the DNA replication initiation complex once per cell cycle. Binds the DnaA box (a 9 base pair repeat at the origin) and separates the double-stranded (ds)DNA. Forms a right-handed helical filament on oriC DNA; dsDNA binds to the exterior of the filament while single-stranded (ss)DNA is stabiized in the filament's interior. The ATP-DnaA-oriC complex binds and stabilizes one strand of the AT-rich DNA unwinding element (DUE), permitting loading of DNA polymerase. After initiation quickly degrades to an ADP-DnaA complex that is not apt for DNA replication. Binds acidic phospholipids. The polypeptide is Chromosomal replication initiator protein DnaA (Shewanella pealeana (strain ATCC 700345 / ANG-SQ1)).